The following is a 107-amino-acid chain: UPF0060 membrane protein RPB_2370 (107 aa).

4 helical membrane-spanning segments follow: residues 5 to 25 (IIYVGAAIAEIAGCFAFWGWL), 31 to 51 (VWWLAPGLLSLALFAYLLTLV), 61 to 81 (AAYGGIYIVASLAWLWSVEGV), and 85 to 105 (RWDVSGACVCLAGAAIILWGP).

The protein belongs to the UPF0060 family.

The protein localises to the cell inner membrane. The polypeptide is UPF0060 membrane protein RPB_2370 (Rhodopseudomonas palustris (strain HaA2)).